Reading from the N-terminus, the 319-residue chain is uncharacterized protein (319 aa).

In terms of domain architecture, SIS spans 36–178 (IIEFLLSFKG…MTVIHEERGF (143 aa)). 51 to 56 (GIGKSG) provides a ligand contact to ATP. CBS domains lie at 203–263 (MRSG…HLKT) and 268–319 (MTKN…MGVS).

It belongs to the SIS family. GutQ/KpsF subfamily.

This is an uncharacterized protein from Rickettsia prowazekii (strain Madrid E).